Consider the following 70-residue polypeptide: Small ribosomal subunit protein bS21B (70 aa).

It belongs to the bacterial ribosomal protein bS21 family.

In Burkholderia thailandensis (strain ATCC 700388 / DSM 13276 / CCUG 48851 / CIP 106301 / E264), this protein is Small ribosomal subunit protein bS21B.